The following is a 347-amino-acid chain: Ataxin-7-like protein 3 (347 aa).

The SGF11-type zinc-finger motif lies at 84-105 (CVCPNCSRSIAASRFAPHLEKC). The segment covering 116 to 125 (ANRRIANSNN) has biased composition (low complexity). Positions 116 to 184 (ANRRIANSNN…GELSNSDPFK (69 aa)) are disordered. Serine 129 and serine 131 each carry phosphoserine. Over residues 132-141 (DQEDNDDIND) the composition is skewed to acidic residues. Residues 196–263 (LGPEELRSLL…SLDNDGFDMT (68 aa)) enclose the SCA7 domain. Residues 275–288 (DGSSDLSPSDSGSS) show a composition bias toward low complexity. A disordered region spans residues 275–347 (DGSSDLSPSD…PTPSIYDDIN (73 aa)). 3 positions are modified to phosphoserine: serine 278, serine 281, and serine 326.

It belongs to the SGF11 family. In terms of assembly, component of some SAGA transcription coactivator-HAT complexes, at least composed of ATXN7, ATXN7L3, ENY2, GCN5L2, SUPT3H, TAF10, TRRAP and USP22. Within the SAGA complex, ENY2, ATXN7, ATXN7L3, and USP22 form an additional subcomplex of SAGA called the DUB module (deubiquitination module). Interacts directly with ENY2 and USP22.

The protein resides in the nucleus. Functionally, component of the transcription regulatory histone acetylation (HAT) complex SAGA, a multiprotein complex that activates transcription by remodeling chromatin and mediating histone acetylation and deubiquitination. Within the SAGA complex, participates in a subcomplex that specifically deubiquitinates both histones H2A and H2B. The SAGA complex is recruited to specific gene promoters by activators such as MYC, where it is required for transcription. Required for nuclear receptor-mediated transactivation. Within the complex, it is required to recruit USP22 and ENY2 into the SAGA complex. Regulates H2B monoubiquitination (H2Bub1) levels. Affects subcellular distribution of ENY2, USP22 and ATXN7L3B. The chain is Ataxin-7-like protein 3 (Atxn7l3) from Mus musculus (Mouse).